A 261-amino-acid polypeptide reads, in one-letter code: uncharacterized protein (261 aa).

Residues M1–S22 form the signal peptide. The N-palmitoyl cysteine moiety is linked to residue C23. The S-diacylglycerol cysteine moiety is linked to residue C23.

Belongs to the staphylococcal tandem lipoprotein family.

The protein localises to the cell membrane. This is an uncharacterized protein from Staphylococcus aureus (strain USA300).